The primary structure comprises 182 residues: NADH-quinone oxidoreductase subunit B 2 (182 aa).

[4Fe-4S] cluster contacts are provided by Cys47, Cys48, Cys113, and Cys142.

It belongs to the complex I 20 kDa subunit family. As to quaternary structure, NDH-1 is composed of 14 different subunits. Subunits NuoB, C, D, E, F, and G constitute the peripheral sector of the complex. [4Fe-4S] cluster serves as cofactor.

Its subcellular location is the cell inner membrane. It catalyses the reaction a quinone + NADH + 5 H(+)(in) = a quinol + NAD(+) + 4 H(+)(out). Its function is as follows. NDH-1 shuttles electrons from NADH, via FMN and iron-sulfur (Fe-S) centers, to quinones in the respiratory chain. The immediate electron acceptor for the enzyme in this species is believed to be ubiquinone. Couples the redox reaction to proton translocation (for every two electrons transferred, four hydrogen ions are translocated across the cytoplasmic membrane), and thus conserves the redox energy in a proton gradient. The polypeptide is NADH-quinone oxidoreductase subunit B 2 (Anaeromyxobacter sp. (strain K)).